The chain runs to 156 residues: ATP synthase subunit b (156 aa).

The chain crosses the membrane as a helical span at residues 7-27; the sequence is FFAQMVVFFILWWVVAKFIWP.

It belongs to the ATPase B chain family. As to quaternary structure, F-type ATPases have 2 components, F(1) - the catalytic core - and F(0) - the membrane proton channel. F(1) has five subunits: alpha(3), beta(3), gamma(1), delta(1), epsilon(1). F(0) has three main subunits: a(1), b(2) and c(10-14). The alpha and beta chains form an alternating ring which encloses part of the gamma chain. F(1) is attached to F(0) by a central stalk formed by the gamma and epsilon chains, while a peripheral stalk is formed by the delta and b chains.

Its subcellular location is the cell inner membrane. Functionally, f(1)F(0) ATP synthase produces ATP from ADP in the presence of a proton or sodium gradient. F-type ATPases consist of two structural domains, F(1) containing the extramembraneous catalytic core and F(0) containing the membrane proton channel, linked together by a central stalk and a peripheral stalk. During catalysis, ATP synthesis in the catalytic domain of F(1) is coupled via a rotary mechanism of the central stalk subunits to proton translocation. Component of the F(0) channel, it forms part of the peripheral stalk, linking F(1) to F(0). The protein is ATP synthase subunit b of Cupriavidus taiwanensis (strain DSM 17343 / BCRC 17206 / CCUG 44338 / CIP 107171 / LMG 19424 / R1) (Ralstonia taiwanensis (strain LMG 19424)).